A 178-amino-acid chain; its full sequence is MHSSALLCFLVFLAGVGASRHQSTLSEDNCTHFSVSLPHMLRELRAAFGKVKTFFQTKDELHSILLTRSLLEDFKGYLGCQALSEMIQFYLEEVMPQAENEDPDIKQHVNSLGEKLKTLRLRLRRCHRFLPCENKSKVVEQVKSTFSKLQEKGVYKAMGEFDIFINYIEAYMTMKMKI.

Residues 1–18 (MHSSALLCFLVFLAGVGA) form the signal peptide. Residue asparagine 29 is glycosylated (N-linked (GlcNAc...) asparagine). Intrachain disulfides connect cysteine 30-cysteine 126 and cysteine 80-cysteine 132. Residue asparagine 134 is glycosylated (N-linked (GlcNAc...) asparagine).

It belongs to the IL-10 family. In terms of assembly, homodimer. Interacts with IL10RA and IL10RB.

The protein resides in the secreted. Major immune regulatory cytokine that acts on many cells of the immune system where it has profound anti-inflammatory functions, limiting excessive tissue disruption caused by inflammation. Mechanistically, IL10 binds to its heterotetrameric receptor comprising IL10RA and IL10RB leading to JAK1 and STAT2-mediated phosphorylation of STAT3. In turn, STAT3 translocates to the nucleus where it drives expression of anti-inflammatory mediators. Targets antigen-presenting cells (APCs) such as macrophages and monocytes and inhibits their release of pro-inflammatory cytokines including granulocyte-macrophage colony-stimulating factor /GM-CSF, granulocyte colony-stimulating factor/G-CSF, IL-1 alpha, IL-1 beta, IL-6, IL-8 and TNF-alpha. Also interferes with antigen presentation by reducing the expression of MHC-class II and co-stimulatory molecules, thereby inhibiting their ability to induce T cell activation. In addition, controls the inflammatory response of macrophages by reprogramming essential metabolic pathways including mTOR signaling. The polypeptide is Interleukin-10 (IL10) (Felis catus (Cat)).